Here is an 86-residue protein sequence, read N- to C-terminus: Large ribosomal subunit protein bL27 (86 aa).

Residues 1-24 (MAHKKGTGSTRNGRDSNSKRLGVK) form a disordered region.

It belongs to the bacterial ribosomal protein bL27 family.

This Prochlorococcus marinus (strain MIT 9301) protein is Large ribosomal subunit protein bL27.